The primary structure comprises 358 residues: Magnesium-protoporphyrin IX monomethyl ester [oxidative] cyclase 1 (358 aa).

It belongs to the AcsF family. Fe cation serves as cofactor.

It catalyses the reaction Mg-protoporphyrin IX 13-monomethyl ester + 3 NADPH + 3 O2 + 2 H(+) = 3,8-divinyl protochlorophyllide a + 3 NADP(+) + 5 H2O. It functions in the pathway porphyrin-containing compound metabolism; chlorophyll biosynthesis (light-independent). In terms of biological role, catalyzes the formation of the isocyclic ring in chlorophyll biosynthesis. Mediates the cyclase reaction, which results in the formation of divinylprotochlorophyllide (Pchlide) characteristic of all chlorophylls from magnesium-protoporphyrin IX 13-monomethyl ester (MgPMME). This chain is Magnesium-protoporphyrin IX monomethyl ester [oxidative] cyclase 1, found in Synechocystis sp. (strain ATCC 27184 / PCC 6803 / Kazusa).